We begin with the raw amino-acid sequence, 427 residues long: 3-phosphoshikimate 1-carboxyvinyltransferase (427 aa).

Positions 20, 21, and 25 each coordinate 3-phosphoshikimate. Lysine 20 serves as a coordination point for phosphoenolpyruvate. Phosphoenolpyruvate is bound by residues glycine 92 and arginine 120. The 3-phosphoshikimate site is built by serine 166, glutamine 168, aspartate 312, and lysine 339. A phosphoenolpyruvate-binding site is contributed by glutamine 168. The active-site Proton acceptor is aspartate 312. Phosphoenolpyruvate contacts are provided by arginine 343 and arginine 385.

The protein belongs to the EPSP synthase family. In terms of assembly, monomer.

The protein resides in the cytoplasm. The catalysed reaction is 3-phosphoshikimate + phosphoenolpyruvate = 5-O-(1-carboxyvinyl)-3-phosphoshikimate + phosphate. It functions in the pathway metabolic intermediate biosynthesis; chorismate biosynthesis; chorismate from D-erythrose 4-phosphate and phosphoenolpyruvate: step 6/7. In terms of biological role, catalyzes the transfer of the enolpyruvyl moiety of phosphoenolpyruvate (PEP) to the 5-hydroxyl of shikimate-3-phosphate (S3P) to produce enolpyruvyl shikimate-3-phosphate and inorganic phosphate. In Streptococcus agalactiae serotype III (strain NEM316), this protein is 3-phosphoshikimate 1-carboxyvinyltransferase.